The sequence spans 354 residues: C-C chemokine receptor type 5 (354 aa).

At 1–32 (MDFQGSVPTYSYDIDYGMSAPCQKINVKQIAA) the chain is on the extracellular side. O-linked (GalNAc...) serine glycosylation is present at serine 6. 3 positions are modified to sulfotyrosine: tyrosine 10, tyrosine 12, and tyrosine 16. Cystine bridges form between cysteine 22–cysteine 271 and cysteine 103–cysteine 180. A helical transmembrane segment spans residues 33 to 60 (QLLPPLYSLVFIFGFVGNMMVFLILISC). The Cytoplasmic segment spans residues 61–70 (KKLKSVTDIY). The chain crosses the membrane as a helical span at residues 71-91 (LLNLAISDLLFLLTLPFWAHY). Over 92–104 (AANEWVFGNIMCK) the chain is Extracellular. A helical transmembrane segment spans residues 105–126 (VFTGLYHIGYFGGIFFIILLTI). At 127-143 (DRYLAIVHAVFALKVRT) the chain is on the cytoplasmic side. The helical transmembrane segment at 144 to 168 (VNFGVITSVVTWAVAVFASLPEIIF) threads the bilayer. The Extracellular portion of the chain corresponds to 169-200 (TRSQKEGFHYTCSPHFPHTQYHFWKSFQTLKM). Residues 201-220 (VILSLILPLLVMVICYSGIL) traverse the membrane as a helical segment. At 221–237 (HTLFRCRNEKKRHRAVR) the chain is on the cytoplasmic side. The helical transmembrane segment at 238–262 (LIFAIMIVYFLFWTPYNIVLLLTTF) threads the bilayer. The Extracellular portion of the chain corresponds to 263-279 (QEFFGLNNCSSSNRLDQ). A helical membrane pass occupies residues 280–303 (AMQATETLGMTHCCLNPVIYAFVG). At 304–354 (EKFRSYLSVFFRKHMVKRFCKRCSIFQQDNPDRASSVYTRSTGEHEVSTGL) the chain is on the cytoplasmic side. 2 S-palmitoyl cysteine lipidation sites follow: cysteine 323 and cysteine 326. Serine 338, serine 339, serine 344, and serine 351 each carry phosphoserine; by BARK1.

It belongs to the G-protein coupled receptor 1 family. As to quaternary structure, interacts with PRAF2. Efficient ligand binding to CCL3/MIP-1alpha and CCL4/MIP-1beta requires sulfation, O-glycosylation and sialic acid modifications. Glycosylation on Ser-6 is required for efficient binding of CCL4. Interacts with GRK2. Interacts with ARRB1 and ARRB2. Interacts with CNIH4. Interacts with S100A4; this interaction stimulates T-lymphocyte chemotaxis. In terms of processing, sulfated on at least 2 of the N-terminal tyrosines. Sulfation is required for efficient binding of the chemokines, CCL3 and CCL4. Post-translationally, O-glycosylated, but not N-glycosylated. Ser-6 appears to be the major site. Also sialylated glycans present which contribute to chemokine binding. Palmitoylation in the C-terminal is important for cell surface expression. In terms of processing, phosphorylation on serine residues in the C-terminal is stimulated by binding CC chemokines especially by APO-RANTES.

Its subcellular location is the cell membrane. Its function is as follows. Receptor for a number of inflammatory CC-chemokines including CCL3/MIP-1-alpha, CCL4/MIP-1-beta and RANTES and subsequently transduces a signal by increasing the intracellular calcium ion level. May play a role in the control of granulocytic lineage proliferation or differentiation. Participates in T-lymphocyte migration to the infection site by acting as a chemotactic receptor. In Mus musculus (Mouse), this protein is C-C chemokine receptor type 5 (Ccr5).